The sequence spans 255 residues: Acetylglutamate kinase (255 aa).

Substrate is bound by residues 40-41 (GG), arginine 62, and asparagine 153.

This sequence belongs to the acetylglutamate kinase family. ArgB subfamily.

Its subcellular location is the cytoplasm. The catalysed reaction is N-acetyl-L-glutamate + ATP = N-acetyl-L-glutamyl 5-phosphate + ADP. The protein operates within amino-acid biosynthesis; L-arginine biosynthesis; N(2)-acetyl-L-ornithine from L-glutamate: step 2/4. Functionally, catalyzes the ATP-dependent phosphorylation of N-acetyl-L-glutamate. This chain is Acetylglutamate kinase, found in Bacillus thuringiensis (strain Al Hakam).